The sequence spans 908 residues: Zinc finger CCCH domain-containing protein 41 (908 aa).

Positions 1-13 (MELSVSSPKQSVL) are enriched in polar residues. The tract at residues 1-124 (MELSVSSPKQ…GRGNYGSWAQ (124 aa)) is disordered. Residues 20–34 (SDPEEEHEISEEEDD) show a composition bias toward acidic residues. Composition is skewed to polar residues over residues 48 to 59 (SQSLEQDSSDQA) and 90 to 105 (GQRVQFDNQRMRSNPM). The C3H1-type zinc finger occupies 200 to 228 (GIPRQRCRDFEERGFCLRGDMCPMEHGMN). Residues 333-375 (NVAPLDDSNQDAAENGCGIRDSRSTSQSVWGRMKGSNSQANSK) are disordered. Polar residues predominate over residues 356–373 (STSQSVWGRMKGSNSQAN). In terms of domain architecture, RRM spans 438–510 (RTLFVNYVPH…RFIKLWWANR (73 aa)). 3 disordered regions span residues 558–590 (PTFQTGGAPSSSEQPKPVVVTTSGPKVTPLQQK), 629–695 (VVKR…KQRP), and 807–908 (RESN…QIHQ). The span at 559-588 (TFQTGGAPSSSEQPKPVVVTTSGPKVTPLQ) shows a compositional bias: polar residues. The stretch at 587-630 (LQQKKADTLERLKETLRKKQEMLEQKRNEYRKKLATLEKQGTVV) forms a coiled coil. The segment covering 630-647 (VKREEADEPDAKRVKLDT) has biased composition (basic and acidic residues). At Ser-657 the chain carries Phosphoserine. The span at 677 to 688 (AKLSTETPSPDS) shows a compositional bias: polar residues. Residues 807–828 (RESNNNNNNSNSLSVSRDNLSS) are compositionally biased toward low complexity. Polar residues predominate over residues 846 to 863 (KTSSTEEPENTNVSGDND). Residues 865-886 (TLDKQETKESDNDNNKSNHESI) show a composition bias toward basic and acidic residues. A compositionally biased stretch (acidic residues) spans 898 to 908 (TDEEQSEQIHQ).

The polypeptide is Zinc finger CCCH domain-containing protein 41 (Arabidopsis thaliana (Mouse-ear cress)).